A 216-amino-acid chain; its full sequence is Acetate CoA-transferase subunit beta (216 aa).

Glu-46 is an active-site residue.

The protein belongs to the 3-oxoacid CoA-transferase subunit B family. As to quaternary structure, heterotetramer composed of two alpha subunits (AtoD) and two beta subunits (AtoA).

Its subcellular location is the cytoplasm. The enzyme catalyses an acyl-CoA + acetate = a carboxylate + acetyl-CoA. It carries out the reaction acetoacetate + acetyl-CoA = acetoacetyl-CoA + acetate. It catalyses the reaction butanoate + acetyl-CoA = butanoyl-CoA + acetate. The catalysed reaction is acetoacetate + butanoyl-CoA = acetoacetyl-CoA + butanoate. It functions in the pathway lipid metabolism; short-chain fatty acid metabolism. With respect to regulation, inhibited by p-chloromercuribenzoate. In terms of biological role, coenzyme A transferase which is involved in short-chain fatty acid degradation and catalyzes the activation of short-chain fatty acids to their respective CoA thiolesters. During acetoacetate degradation, catalyzes the transfer of CoA from acetyl-CoA to acetoacetate by a mechanism involving a covalent enzyme-CoA compound as a reaction intermediate. Utilizes a variety of short chain acyl-CoA and carboxylic acid substrates but exhibits maximal activity with normal and 3-keto substrates. The protein is Acetate CoA-transferase subunit beta of Escherichia coli (strain K12).